The chain runs to 537 residues: [Pyruvate dehydrogenase [acetyl-transferring]]-phosphatase 1, mitochondrial (537 aa).

A mitochondrion-targeting transit peptide spans 1–71 (MPAPTQLFFP…WWQYTQGRRY (71 aa)). Positions 109-525 (ILGFDSNQLP…DDITIIVVQF (417 aa)) constitute a PPM-type phosphatase domain. Residues D144 and G145 each contribute to the Mn(2+) site. An N6-acetyllysine modification is found at K202. Mn(2+) is bound by residues D418 and D516.

This sequence belongs to the PP2C family. Heterodimer of a catalytic (PDP1) and a regulatory (PDPR) subunit. It depends on Mn(2+) as a cofactor. Mg(2+) is required as a cofactor.

The protein resides in the mitochondrion. The catalysed reaction is O-phospho-L-seryl-[pyruvate dehydrogenase E1 alpha subunit] + H2O = L-seryl-[pyruvate dehydrogenase E1 alpha subunit] + phosphate. Magnesium-dependent and calcium-stimulated. PDP1 activity strongly depends on its Ca(2+)-dependent binding to the lipoyl domain of E2 subunit of component of the pyruvate dehydrogenase complex. Mitochondrial enzyme that catalyzes the dephosphorylation and concomitant reactivation of the alpha subunit of the E1 component of the pyruvate dehydrogenase complex (PDC), thereby stimulating the conversion of pyruvate into acetyl-CoA. This is [Pyruvate dehydrogenase [acetyl-transferring]]-phosphatase 1, mitochondrial from Homo sapiens (Human).